Consider the following 463-residue polypeptide: Major capsid protein (463 aa).

Belongs to the NCLDV major capsid protein family. Homotrimer.

Its subcellular location is the virion. Major capsid protein that self assembles to form an icosahedral capsid. Represents around 50% of the total virion protein mass. This chain is Major capsid protein (MCP), found in Rana tigrina ranavirus.